The sequence spans 287 residues: Merozoite surface protein 2 (287 aa).

Positions 1–20 are cleaved as a signal peptide; sequence MKVIKTLSIINFFIFVTFNI. 2 N-linked (GlcNAc...) asparagine glycosylation sites follow: asparagine 22 and asparagine 36. A disordered region spans residues 42 to 248; sequence SMTESNPPTG…DSQKECTDGN (207 aa). The segment at 44 to 213 is polymorphic region; sequence TESNPPTGAS…EQTESPELQS (170 aa). The span at 54–112 shows a compositional bias: gly residues; the sequence is GSAGGSAGGSAGGSAGGSAGGSAGGSAGGSAGGSAGGSAGGSAGGSAGGSAGSGDGNGA. A run of 12 repeats spans residues 55–58, 59–62, 63–66, 67–70, 71–74, 75–78, 79–82, 83–86, 87–90, 91–94, 95–98, and 99–102. The 12 X 4 AA tandem repeats of S-A-G-G stretch occupies residues 55-102; that stretch reads SAGGSAGGSAGGSAGGSAGGSAGGSAGGSAGGSAGGSAGGSAGGSAGG. A compositionally biased stretch (low complexity) spans 121-149; it reads SPSTPATTTTTTTTNDAEASTSTSSENPN. 2 stretches are compositionally biased toward polar residues: residues 150 to 180 and 187 to 215; these read HNNA…NVPP and KSPT…QSAP. Residue asparagine 164 is glycosylated (N-linked (GlcNAc...) asparagine). A glycan (N-linked (GlcNAc...) asparagine) is linked at asparagine 236. A disulfide bridge links cysteine 244 with cysteine 252. Residues asparagine 260 and asparagine 261 are each glycosylated (N-linked (GlcNAc...) asparagine). The GPI-anchor amidated asparagine moiety is linked to residue asparagine 261. A propeptide spans 262–287 (removed in mature form); that stretch reads SSNIASINKFVVLISATLVLSFAIFI.

It is found in the cell membrane. May play a role in the merozoite attachment to the erythrocyte. In Plasmodium falciparum (isolate FCR-3 / Gambia), this protein is Merozoite surface protein 2.